Reading from the N-terminus, the 534-residue chain is Peptide chain release factor 3 (534 aa).

Positions 9–278 (ARRRTFAIIS…FFVEHAPSPQ (270 aa)) constitute a tr-type G domain. Residues 18–25 (SHPDAGKT), 86–90 (DTPGH), and 140–143 (NKLD) contribute to the GTP site.

Belongs to the TRAFAC class translation factor GTPase superfamily. Classic translation factor GTPase family. PrfC subfamily.

Its subcellular location is the cytoplasm. In terms of biological role, increases the formation of ribosomal termination complexes and stimulates activities of RF-1 and RF-2. It binds guanine nucleotides and has strong preference for UGA stop codons. It may interact directly with the ribosome. The stimulation of RF-1 and RF-2 is significantly reduced by GTP and GDP, but not by GMP. In Xylella fastidiosa (strain M12), this protein is Peptide chain release factor 3.